Reading from the N-terminus, the 229-residue chain is MDKKGWSLKGSLLPLLLLVSDLLLCQSVASLPICPTGAVNCQVSLRDLFDRAVILSHYIHNLSSEMFNEFDKRYAQGRGFITKAINSCHTSSLSTPEDKEQAQQIHHEDLLNLILRVLRSWNDPLYHLVTEVRGMQEAPDSILSRAIEIEEQNRRLLEGMEKIVGQVHPGVRENEVYSVWSGLPSLQMADEDTRLFAFYNLLHCLRRDSHKIDNYLKLLKCRIVYDSNC.

An N-terminal signal peptide occupies residues 1-30; it reads MDKKGWSLKGSLLPLLLLVSDLLLCQSVAS. C34 and C41 form a disulfide bridge. Residues S56, S64, and S120 each carry the phosphoserine modification. Disulfide bonds link C88–C204 and C221–C229.

This sequence belongs to the somatotropin/prolactin family. As to quaternary structure, interacts with PRLR.

Its subcellular location is the secreted. Functionally, prolactin acts primarily on the mammary gland by promoting lactation. In Ailuropoda melanoleuca (Giant panda), this protein is Prolactin (PRL).